The following is a 396-amino-acid chain: NADH-quinone oxidoreductase subunit D (396 aa).

This sequence belongs to the complex I 49 kDa subunit family. In terms of assembly, NDH-1 is composed of 14 different subunits. Subunits NuoB, C, D, E, F, and G constitute the peripheral sector of the complex.

The protein localises to the cell inner membrane. It catalyses the reaction a quinone + NADH + 5 H(+)(in) = a quinol + NAD(+) + 4 H(+)(out). NDH-1 shuttles electrons from NADH, via FMN and iron-sulfur (Fe-S) centers, to quinones in the respiratory chain. The immediate electron acceptor for the enzyme in this species is believed to be ubiquinone. Couples the redox reaction to proton translocation (for every two electrons transferred, four hydrogen ions are translocated across the cytoplasmic membrane), and thus conserves the redox energy in a proton gradient. The polypeptide is NADH-quinone oxidoreductase subunit D (Brucella melitensis biotype 1 (strain ATCC 23456 / CCUG 17765 / NCTC 10094 / 16M)).